The primary structure comprises 298 residues: 4-hydroxy-tetrahydrodipicolinate synthase (298 aa).

Threonine 51 is a pyruvate binding site. Catalysis depends on tyrosine 139, which acts as the Proton donor/acceptor. Lysine 167 (schiff-base intermediate with substrate) is an active-site residue. Residue isoleucine 209 participates in pyruvate binding.

This sequence belongs to the DapA family. As to quaternary structure, homotetramer; dimer of dimers.

It localises to the cytoplasm. The enzyme catalyses L-aspartate 4-semialdehyde + pyruvate = (2S,4S)-4-hydroxy-2,3,4,5-tetrahydrodipicolinate + H2O + H(+). It functions in the pathway amino-acid biosynthesis; L-lysine biosynthesis via DAP pathway; (S)-tetrahydrodipicolinate from L-aspartate: step 3/4. Its function is as follows. Catalyzes the condensation of (S)-aspartate-beta-semialdehyde [(S)-ASA] and pyruvate to 4-hydroxy-tetrahydrodipicolinate (HTPA). This chain is 4-hydroxy-tetrahydrodipicolinate synthase, found in Histophilus somni (strain 2336) (Haemophilus somnus).